Consider the following 87-residue polypeptide: Small ribosomal subunit protein bS20 (87 aa).

Residues 1 to 26 (MANIKSAKKRAIQSEKARKHNASRRS) are disordered.

Belongs to the bacterial ribosomal protein bS20 family.

Its function is as follows. Binds directly to 16S ribosomal RNA. The polypeptide is Small ribosomal subunit protein bS20 (Escherichia coli O17:K52:H18 (strain UMN026 / ExPEC)).